The following is a 135-amino-acid chain: Large ribosomal subunit protein bL17 (135 aa).

Belongs to the bacterial ribosomal protein bL17 family. As to quaternary structure, part of the 50S ribosomal subunit. Contacts protein L32.

This Listeria innocua serovar 6a (strain ATCC BAA-680 / CLIP 11262) protein is Large ribosomal subunit protein bL17.